Here is a 257-residue protein sequence, read N- to C-terminus: Imidazole glycerol phosphate synthase subunit HisF (257 aa).

Catalysis depends on residues Asp11 and Asp130.

The protein belongs to the HisA/HisF family. As to quaternary structure, heterodimer of HisH and HisF.

It localises to the cytoplasm. It catalyses the reaction 5-[(5-phospho-1-deoxy-D-ribulos-1-ylimino)methylamino]-1-(5-phospho-beta-D-ribosyl)imidazole-4-carboxamide + L-glutamine = D-erythro-1-(imidazol-4-yl)glycerol 3-phosphate + 5-amino-1-(5-phospho-beta-D-ribosyl)imidazole-4-carboxamide + L-glutamate + H(+). It participates in amino-acid biosynthesis; L-histidine biosynthesis; L-histidine from 5-phospho-alpha-D-ribose 1-diphosphate: step 5/9. In terms of biological role, IGPS catalyzes the conversion of PRFAR and glutamine to IGP, AICAR and glutamate. The HisF subunit catalyzes the cyclization activity that produces IGP and AICAR from PRFAR using the ammonia provided by the HisH subunit. The polypeptide is Imidazole glycerol phosphate synthase subunit HisF (Xylella fastidiosa (strain M23)).